An 840-amino-acid polypeptide reads, in one-letter code: Kinesin-like protein KIN-14J (840 aa).

The interval 1 to 74 (MEADPAPSST…KGEEPVVSAE (74 aa)) is disordered. In terms of domain architecture, Kinesin motor spans 177 to 501 (NIRVFCRCRP…LNFASRVRAI (325 aa)). 260–267 (GQTGTGKT) contacts ATP. A coiled-coil region spans residues 517–594 (KLKQMTEKIR…KKAARDTARS (78 aa)). Basic and acidic residues predominate over residues 581 to 593 (LANEKKAARDTAR). The segment at 581-617 (LANEKKAARDTARSTKPPLAPMRQRPPLGRIGNHIPP) is disordered.

This sequence belongs to the TRAFAC class myosin-kinesin ATPase superfamily. Kinesin family. KIN-14 subfamily.

The chain is Kinesin-like protein KIN-14J from Oryza sativa subsp. japonica (Rice).